The sequence spans 86 residues: Protein Vpu (86 aa).

At 1 to 12 (MLELIGRIDYRL) the chain is on the extracellular side. A helical membrane pass occupies residues 13–33 (GVGALIVALIIVIIVWTIAYI). The Cytoplasmic segment spans residues 34–86 (EYRKLVRQRRIDWLVKRIKERAEDSGNESGGDTEELETMVDMGHLRLLDGNDL). Ser-58 and Ser-62 each carry phosphoserine; by host CK2.

The protein belongs to the HIV-1 VPU protein family. In terms of assembly, homopentamer. Interacts with host CD4 and BRTC; these interactions induce proteasomal degradation of CD4. Interacts with host BST2; this interaction leads to the degradation of host BST2. Interacts with host FBXW11. Interacts with host AP1M1; this interaction plays a role in the mistrafficking and subsequent degradation of host BST2. Interacts with host RANBP2; this interaction allows Vpu to down-regulate host BLM sumoylation. In terms of processing, phosphorylated by host CK2. This phosphorylation is necessary for interaction with human BTRC and degradation of CD4.

It localises to the host membrane. Its activity is regulated as follows. Ion channel activity is inhibited by hexamethylene amiloride in vitro. Its function is as follows. Enhances virion budding, by targeting human CD4 and Tetherin/BST2 to proteasome degradation. Degradation of CD4 prevents any unwanted premature interactions between viral Env and its host receptor CD4 in the endoplasmic reticulum. Degradation of antiretroviral protein Tetherin/BST2 is important for virion budding, as BST2 tethers new viral particles to the host cell membrane. Mechanistically, Vpu bridges either CD4 or BST2 to BTRC, a substrate recognition subunit of the Skp1/Cullin/F-box protein E3 ubiquitin ligase, induces their ubiquitination and subsequent proteasomal degradation. The alteration of the E3 ligase specificity by Vpu seems to promote the degradation of host IKBKB, leading to NF-kappa-B down-regulation and subsequent apoptosis. Acts as a viroporin that forms an oligomeric ion channel in membranes. Modulates the host DNA repair mechanisms to promote degradation of nuclear viral cDNA in cells that are already productively infected in order to suppress immune sensing and proviral hyper-integration (superinfection). Manipulates PML-NBs and modulates SUMOylation of host BLM protein thereby enhancing its DNA-end processing activity toward viral unintegrated linear DNA. Also inhibits RAD52-mediated homologous repair of viral cDNA, preventing the generation of dead-end circular forms of single copies of the long terminal repeat and permitting sustained nucleolytic attack. This Homo sapiens (Human) protein is Protein Vpu.